Here is a 280-residue protein sequence, read N- to C-terminus: L-proline cis-4-hydroxylase (280 aa).

Fe cation is bound by residues histidine 106, aspartate 108, and histidine 154. Arginine 164 contributes to the 2-oxoglutarate binding site.

Belongs to the L-proline cis-4-/cis-3-hydroxylase family. Fe(2+) is required as a cofactor.

The catalysed reaction is L-proline + 2-oxoglutarate + O2 = cis-4-hydroxy-L-proline + succinate + CO2. Its activity is regulated as follows. Inhibited by metal ions such as Co(2+), Zn(2+), Cu(2+) or Ni(2+). Is also inhibited by EDTA or diethylpyrocarbonate (DEPC) in vitro. Unlike the procollagen-proline cis-3- and trans-4-hydroxylases from mammals, does not necessarily require L-ascorbate for activity although it does increase the activity of the enzyme. In terms of biological role, dioxygenase that catalyzes the 2-oxoglutarate-dependent selective hydroxylation of free L-proline to cis-4-hydroxy-L-proline (cis-4-Hyp). The chain is L-proline cis-4-hydroxylase from Rhizobium meliloti (strain 1021) (Ensifer meliloti).